The following is a 343-amino-acid chain: N-acetyl-gamma-glutamyl-phosphate reductase (343 aa).

The active site involves cysteine 149.

The protein belongs to the NAGSA dehydrogenase family. Type 1 subfamily.

The protein resides in the cytoplasm. The catalysed reaction is N-acetyl-L-glutamate 5-semialdehyde + phosphate + NADP(+) = N-acetyl-L-glutamyl 5-phosphate + NADPH + H(+). The protein operates within amino-acid biosynthesis; L-arginine biosynthesis; N(2)-acetyl-L-ornithine from L-glutamate: step 3/4. In terms of biological role, catalyzes the NADPH-dependent reduction of N-acetyl-5-glutamyl phosphate to yield N-acetyl-L-glutamate 5-semialdehyde. The polypeptide is N-acetyl-gamma-glutamyl-phosphate reductase (Methanococcus maripaludis (strain C5 / ATCC BAA-1333)).